Here is a 1010-residue protein sequence, read N- to C-terminus: MEGAAPPASSGSEVTGAGSGKVDAGGGAAMEERFADLCKSKLGLDESITRQAMQLFKESKSILLSSMSSLGSGSPEEIERFWSAFVLYCVSRLGKAGKGKEDGGISLCQILRAFSLNIVDFFKEMPQFCIKVGSVLAGLYGSDWEKRLELKELQANVVHLSLLSRYYKRAYQELFLLNDAKPPENSAEPNAQASDYYRFGWLLFLVLRIQTFSRFKDLVTSTNGLVSVLAVLIVHIPVRLRNFNIKESSSFAKKSDKGVNLIASLCEKYHTSEDELSKAIEKTNTLIVDILKKKPCPAASECQQDRLSFIDPEGLTYFKNLLEEDSLKLSLLMLEKEYENAINTKGELDERMFANDEDSLLGSGSLSGGAINLPGTKRKYDVMASPAKSITSPSPMSPPRFCASPTGNGYCSSKMAPITPVSTAMTTAKWLRSTISPLPSKPSGELLRFFSACDKDVTDDITRRAGIILGAIFTSSSFGERICTSVRSTNRIDAIWTEQRKMEALKLYYRVLESMCRAETQILSGNNLTSLLSNERFHRCMIACSAELVLATHKTVTMMFPAVLEKTGITAFDLSKVIESFVRHEDTLPRELKRHLNSLEERLLESMAWEKGSSMYNSLIVARPTLSAEINRLGLLAEPMPSLDAIAAHHNISLEGLPPLPFQKQEHSPDKDEVRSPKRACTERRNVLVDNNSFRSPVKDTLKSKLPPLQSAFLSPTRPNPAAGGELCAETGIGVFLSKIAKLAAIRIRGLCERLQLSQQVLERVYSLVQQIIIQQTALFFNRHIDQIILCSIYGVAKISQLALTFKEIIFGYRKQSQCKPQVFRSVYVHWASRSRNGKTGEDHVDIITFYNEVFIPTVKPLLVELGSGTSPNKKNEEKCAADGPYPESPRLSRFPNLPDMSPKKVSAAHNVYVSPLRTSKMDTLLSPSSKSYYACVGESTHAFQSPSKDLKVINNRLNSGKKVSGRLNFDVVSDLVVARSLSDQNSASAAATTADIATKTPVKLEQPDC.

The segment at 1 to 23 is disordered; that stretch reads MEGAAPPASSGSEVTGAGSGKVD. Positions 419–619 are domain A; that stretch reads TPVSTAMTTA…EKGSSMYNSL (201 aa). The interval 419–861 is pocket; it reads TPVSTAMTTA…NEVFIPTVKP (443 aa). Positions 620-730 are spacer; sequence IVARPTLSAE…PAAGGELCAE (111 aa). Positions 657 to 679 are disordered; the sequence is LPPLPFQKQEHSPDKDEVRSPKR. Positions 664–679 are enriched in basic and acidic residues; sequence KQEHSPDKDEVRSPKR. Residues 731–861 are domain B; that stretch reads TGIGVFLSKI…NEVFIPTVKP (131 aa). The tract at residues 868–898 is disordered; sequence SGTSPNKKNEEKCAADGPYPESPRLSRFPNL.

This sequence belongs to the retinoblastoma protein (RB) family.

The protein resides in the nucleus. Its function is as follows. Regulator of biological processes that recruits a histone deacetylase to control gene transcription. May play a role in the entry into mitosis, negatively regulating the cell proliferation. Formation of stable complexes with geminiviridae replication-associated proteins may create a cellular environment which favors viral DNA replication. This Oryza sativa subsp. japonica (Rice) protein is Retinoblastoma-related protein 1 (RBR1).